The primary structure comprises 307 residues: 4-diphosphocytidyl-2-C-methyl-D-erythritol kinase (307 aa).

The active site involves K9. Position 94–104 (94–104 (PIGAGLAGGSS)) interacts with ATP. D136 is an active-site residue.

Belongs to the GHMP kinase family. IspE subfamily.

It carries out the reaction 4-CDP-2-C-methyl-D-erythritol + ATP = 4-CDP-2-C-methyl-D-erythritol 2-phosphate + ADP + H(+). The protein operates within isoprenoid biosynthesis; isopentenyl diphosphate biosynthesis via DXP pathway; isopentenyl diphosphate from 1-deoxy-D-xylulose 5-phosphate: step 3/6. Functionally, catalyzes the phosphorylation of the position 2 hydroxy group of 4-diphosphocytidyl-2C-methyl-D-erythritol. The polypeptide is 4-diphosphocytidyl-2-C-methyl-D-erythritol kinase (Synechococcus sp. (strain CC9605)).